Consider the following 632-residue polypeptide: PWWP domain-containing protein 5 (632 aa).

Residues 97-158 (DSDLVWAKLR…ASQIKPFHQN (62 aa)) form the PWWP domain. The segment at 310 to 452 (RKTDYKDNAE…AERKISSPDE (143 aa)) is disordered. Basic and acidic residues-rich tracts occupy residues 313-326 (DYKD…EKTL), 339-364 (STEK…GKSE), 371-383 (QQKE…HSNE), and 425-449 (KSTE…KISS). Residues 352–359 (KRKVESSE) carry the Nuclear localization signal motif.

The protein belongs to the PDP family. In terms of assembly, component of the PRC2 (polycomb repressive complex 2) complex which regulates histone methylation on histone H3K27.

The protein localises to the nucleus. May influence gene expression by regulating the function of the PRC2 complex and modulating H3K27me3 level. This Arabidopsis thaliana (Mouse-ear cress) protein is PWWP domain-containing protein 5.